Consider the following 379-residue polypeptide: Protein RecA (379 aa).

The segment at 1 to 23 (MSVDVKSAQSSKSDSLQVEPRPG) is disordered. A compositionally biased stretch (polar residues) spans 7–16 (SAQSSKSDSL). 84 to 91 (GPESSGKT) is a binding site for ATP.

Belongs to the RecA family.

The protein resides in the cytoplasm. Its function is as follows. Can catalyze the hydrolysis of ATP in the presence of single-stranded DNA, the ATP-dependent uptake of single-stranded DNA by duplex DNA, and the ATP-dependent hybridization of homologous single-stranded DNAs. It interacts with LexA causing its activation and leading to its autocatalytic cleavage. The sequence is that of Protein RecA from Prochlorococcus marinus (strain MIT 9313).